A 200-amino-acid chain; its full sequence is uncharacterized protein (200 aa).

Residues 149 to 200 (APDPGGSVATEEVLRSDDRDSHTQDSASEWPEGNDSVGSAAMRIDLSRIGGT) form a disordered region. The segment covering 160 to 171 (EVLRSDDRDSHT) has biased composition (basic and acidic residues).

This sequence to A.tumefaciens Ti plasmid conjugal transfer region I ORFR2 and ORFR3.

This is an uncharacterized protein from Sinorhizobium fredii (strain NBRC 101917 / NGR234).